We begin with the raw amino-acid sequence, 236 residues long: (5-formylfuran-3-yl)methyl phosphate synthase (236 aa).

The active-site Schiff-base intermediate with substrate is K27. K85 (proton acceptor) is an active-site residue.

This sequence belongs to the MfnB family.

It carries out the reaction 2 D-glyceraldehyde 3-phosphate = 4-(hydroxymethyl)-2-furancarboxaldehyde phosphate + phosphate + 2 H2O. Its pathway is cofactor biosynthesis; methanofuran biosynthesis. In terms of biological role, catalyzes the formation of 4-(hydroxymethyl)-2-furancarboxaldehyde phosphate (4-HFC-P) from two molecules of glyceraldehyde-3-P (GA-3-P). In Methanococcus maripaludis (strain DSM 14266 / JCM 13030 / NBRC 101832 / S2 / LL), this protein is (5-formylfuran-3-yl)methyl phosphate synthase.